The primary structure comprises 182 residues: UPF0301 protein MCA0413 1 (182 aa).

This sequence belongs to the UPF0301 (AlgH) family.

The polypeptide is UPF0301 protein MCA0413 1 (Methylococcus capsulatus (strain ATCC 33009 / NCIMB 11132 / Bath)).